Reading from the N-terminus, the 501-residue chain is uncharacterized protein (501 aa).

2 disordered regions span residues 179-404 and 480-501; these read EKTS…DETA and SDDT…DDSD. The span at 191 to 200 shows a compositional bias: basic and acidic residues; sequence SRNESQDKSR. A compositionally biased stretch (basic residues) spans 201–214; that stretch reads DKSRKKVCNTHKNK. The segment covering 215-226 has biased composition (basic and acidic residues); that stretch reads KTLDNVKPDKNI. A compositionally biased stretch (low complexity) spans 231–274; it reads SSNKFTTNKPKSNKNSSDSDGSTKTTKSTRSTKSTKSSKSQKST. The span at 304 to 316 shows a compositional bias: basic and acidic residues; it reads NPKESINHKKNDS. Residues 333–352 are compositionally biased toward polar residues; that stretch reads DSTNCRKSNRTTTRDVTNSD. The span at 379–403 shows a compositional bias: acidic residues; that stretch reads EQSDLTEDETEENVSEEDETEEDET.

This is an uncharacterized protein from Acanthamoeba polyphaga mimivirus (APMV).